The primary structure comprises 301 residues: G-protein coupled receptor homolog U51 (301 aa).

Over 1 to 15 (MEKETKSLAWPATAE) the chain is Extracellular. A helical membrane pass occupies residues 16 to 36 (FYGWVFIFSSIQLCTVVFLTV). The Cytoplasmic segment spans residues 37-48 (RFNGFKVGREYA). A helical membrane pass occupies residues 49–69 (VFTFAGMSFNCFLLPIKMGLL). Topologically, residues 70–82 (SGHWTLPRDFCAI) are extracellular. A helical membrane pass occupies residues 83 to 103 (LLYIDDFSAYFSSWSLVFMAI). The Cytoplasmic portion of the chain corresponds to 104-122 (ERINYFCYSTPLLNENSKA). Residues 123–143 (LAKVCFPIVWVVSGVQALQML) traverse the membrane as a helical segment. Topologically, residues 144–168 (NNYKATALQNETGQCFLAFLRSGHD) are extracellular. N-linked (GlcNAc...) asparagine; by host glycosylation occurs at asparagine 153. A helical transmembrane segment spans residues 169 to 189 (MWLMLVYSVVIPVMLVFFYLY). The Cytoplasmic segment spans residues 190-199 (SKNFMLLKDE). The chain crosses the membrane as a helical span at residues 200–220 (LSSVTTYLCIYLLLGTIAHLP). Over 221-238 (KAALSEIESDKIFYGLRD) the chain is Extracellular. The helical transmembrane segment at 239 to 259 (IFMALPVLKVYYISAMAYCMA) threads the bilayer. The Cytoplasmic segment spans residues 260-301 (CDDHTVPVRLCSIWLVNLCKKCFSCTRREKGSDLEVGIKMLK).

Belongs to the G-protein coupled receptor 1 family.

It localises to the host cell membrane. The chain is G-protein coupled receptor homolog U51 (U51) from Homo sapiens (Human).